Consider the following 440-residue polypeptide: 23S rRNA (uracil(1939)-C(5))-methyltransferase RlmD (440 aa).

Positions 11–69 (STLDTKHQPVTIERLDHQGSGLAFLHKKPLFVDGALPGEEVLIQLTENKSKYARGQLIK) constitute a TRAM domain. The [4Fe-4S] cluster site is built by cysteine 82, cysteine 88, cysteine 91, and cysteine 169. Glutamine 272, phenylalanine 301, asparagine 306, glutamate 322, asparagine 349, and aspartate 370 together coordinate S-adenosyl-L-methionine. The active-site Nucleophile is the cysteine 396.

It belongs to the class I-like SAM-binding methyltransferase superfamily. RNA M5U methyltransferase family. RlmD subfamily.

It catalyses the reaction uridine(1939) in 23S rRNA + S-adenosyl-L-methionine = 5-methyluridine(1939) in 23S rRNA + S-adenosyl-L-homocysteine + H(+). Its function is as follows. Catalyzes the formation of 5-methyl-uridine at position 1939 (m5U1939) in 23S rRNA. In Vibrio cholerae serotype O1 (strain M66-2), this protein is 23S rRNA (uracil(1939)-C(5))-methyltransferase RlmD.